A 298-amino-acid chain; its full sequence is Cyclic dof factor 1 (298 aa).

Residues 27–46 (EEEEKNQNKTLTDQSEKDKT) are disordered. The Dof-type zinc-finger motif lies at 54 to 108 (LPCPRCNSMETKFCYYNNYNVNQPRHFCKACQRYWTSGGTMRSVPIGAGRRKNKN). Zn(2+)-binding residues include Cys-56, Cys-59, Cys-81, and Cys-84. A disordered region spans residues 200-231 (SSSPTSTLGKHSRDEDETVKQKQRNGSVLVPK). Positions 210 to 219 (HSRDEDETVK) are enriched in basic and acidic residues.

As to quaternary structure, interacts with ADO2 (via kelch repeats), ADO3 (via kelch repeats) and GI (via N-terminus). Post-translationally, ubiquitinated. Expressed in the vascular tissues of cotyledons, leaves and hypocotyls and in stomata. Not detected in roots.

It localises to the nucleus. Its function is as follows. Transcription factor that binds specifically to a 5'-AA[AG]G-3' consensus core sequence. A flanking TGT sequence contributes to the specificity of binding. Regulates a photoperiodic flowering response. Transcriptional repressor of 'CONSTANS' expression. The DNA-binding ability is not modulated by 'GIGANTEA' but the stability of CDF1 is controlled by the proteasome-dependent pathway. Ubiquitinated by the SCF(ADO3) E3 ubiquitin ligase complex. Binds to the FT promoter in the morning. The chain is Cyclic dof factor 1 (CDF1) from Arabidopsis thaliana (Mouse-ear cress).